The sequence spans 637 residues: Chaperone protein HtpG (637 aa).

The tract at residues 1-335 (MQGTVNSERL…SSDLPLNISR (335 aa)) is a; substrate-binding. Residues 336 to 559 (ETLQNNKIIE…DGSMDIRMER (224 aa)) form a b region. The c stretch occupies residues 560–637 (FLREQKQLNY…RMNNVLSQIN (78 aa)).

Belongs to the heat shock protein 90 family. As to quaternary structure, homodimer.

It is found in the cytoplasm. Functionally, molecular chaperone. Has ATPase activity. This Ehrlichia ruminantium (strain Welgevonden) protein is Chaperone protein HtpG.